The sequence spans 92 residues: Small ribosomal subunit protein uS19 (92 aa).

The protein belongs to the universal ribosomal protein uS19 family.

In terms of biological role, protein S19 forms a complex with S13 that binds strongly to the 16S ribosomal RNA. This is Small ribosomal subunit protein uS19 from Francisella tularensis subsp. tularensis (strain FSC 198).